The primary structure comprises 115 residues: Thrombospondin type-1 domain-containing protein 8 (115 aa).

Residues 1–21 (MARTPGALLLAPLLLLQLATP) form the signal peptide. Residues 53-104 (DSILGPWGKWRCLCDLGKQERSREVVGTAPGPVFMDPEKLIQLRPCRQRDCP) form the TSP type-1 domain.

The polypeptide is Thrombospondin type-1 domain-containing protein 8 (Homo sapiens (Human)).